We begin with the raw amino-acid sequence, 227 residues long: CDP-diacylglycerol--inositol 3-phosphatidyltransferase 1 (227 aa).

Transmembrane regions (helical) follow at residues 12-36 (LSVYLYIPNIVGYMRVLLNCVAFAV) and 42-61 (PLFSVLYFFSFCCDAVDGWV). Mg(2+) contacts are provided by D55 and D58. A CDP-1,2-diacyl-sn-glycerol-binding residues include G59, R63, and S69. 4 helical membrane-spanning segments follow: residues 73–95 (AVLDMVTDRVSTACLLVILSQIY), 101–122 (FLSLLALDIASHWLQMYSTFLA), 142–165 (YGNRIFMCYCCVSCEVLYIILLLI), and 177–200 (VVATLTQISPLSFLLALTLFGWSM). Mg(2+) contacts are provided by D76 and D80. D80 (proton acceptor) is an active-site residue.

This sequence belongs to the CDP-alcohol phosphatidyltransferase class-I family. Mg(2+) is required as a cofactor. Mn(2+) serves as cofactor. In terms of tissue distribution, expressed in stems, flowers, shoots and roots. Present in epidermal tissues.

The protein localises to the membrane. The enzyme catalyses a CDP-1,2-diacyl-sn-glycerol + myo-inositol = a 1,2-diacyl-sn-glycero-3-phospho-(1D-myo-inositol) + CMP + H(+). Its function is as follows. Catalyzes the biosynthesis of phosphatidylinositol (PtdIns) as well as PtdIns:inositol exchange reaction. May thus act to reduce an excessive cellular PtdIns content. The exchange activity is due to the reverse reaction of PtdIns synthase and is dependent on CMP, which is tightly bound to the enzyme. The protein is CDP-diacylglycerol--inositol 3-phosphatidyltransferase 1 (PIS1) of Arabidopsis thaliana (Mouse-ear cress).